The chain runs to 276 residues: Tryptophan synthase alpha chain (276 aa).

Active-site proton acceptor residues include glutamate 46 and glutamate 57.

The protein belongs to the TrpA family. As to quaternary structure, tetramer of two alpha and two beta chains.

It catalyses the reaction (1S,2R)-1-C-(indol-3-yl)glycerol 3-phosphate + L-serine = D-glyceraldehyde 3-phosphate + L-tryptophan + H2O. It functions in the pathway amino-acid biosynthesis; L-tryptophan biosynthesis; L-tryptophan from chorismate: step 5/5. Functionally, the alpha subunit is responsible for the aldol cleavage of indoleglycerol phosphate to indole and glyceraldehyde 3-phosphate. This chain is Tryptophan synthase alpha chain, found in Halobacterium salinarum (strain ATCC 29341 / DSM 671 / R1).